The chain runs to 711 residues: Polyribonucleotide nucleotidyltransferase (711 aa).

Positions 486 and 492 each coordinate Mg(2+). The KH domain occupies 553 to 612 (PRIHTIKINPDKIKDVIGKGGSVIRALTEETGTTIEIEDDGTVKIAATDGDKAQHAIRRI). In terms of domain architecture, S1 motif spans 622 to 690 (GRIYNGKVTR…RQGRVRLSIK (69 aa)). The tract at residues 691 to 711 (EATEQTPSAAAPEAPVAEQGE) is disordered. Positions 699–711 (AAAPEAPVAEQGE) are enriched in low complexity.

Belongs to the polyribonucleotide nucleotidyltransferase family. As to quaternary structure, component of the RNA degradosome, which is a multiprotein complex involved in RNA processing and mRNA degradation. Mg(2+) serves as cofactor.

It localises to the cytoplasm. It catalyses the reaction RNA(n+1) + phosphate = RNA(n) + a ribonucleoside 5'-diphosphate. Functionally, involved in mRNA degradation. Catalyzes the phosphorolysis of single-stranded polyribonucleotides processively in the 3'- to 5'-direction. The polypeptide is Polyribonucleotide nucleotidyltransferase (Klebsiella pneumoniae (strain 342)).